The sequence spans 653 residues: Bifunctional lysine-specific demethylase and histidyl-hydroxylase NO66 (653 aa).

Positions 1 to 12 (MKKATTSAAAKS) are enriched in low complexity. Disordered stretches follow at residues 1–50 (MKKA…DMLA) and 65–137 (FDDD…LERT). The span at 13–26 (QGNSKMQKNANNGT) shows a compositional bias: polar residues. S44 is modified (phosphoserine). A compositionally biased stretch (low complexity) spans 72 to 86 (STSKKTQSGSAAAAK). S131 carries the post-translational modification Phosphoserine. Phosphothreonine is present on T137. S138 carries the phosphoserine modification. The interval 184–208 (AEPTEEGNNNNDEKETETIETHKAD) is disordered. The segment covering 194-208 (NDEKETETIETHKAD) has biased composition (basic and acidic residues). Residues 300-450 (FYSDGCSIRL…NLLETLMPMV (151 aa)) form the JmjC domain. H351, D353, and H416 together coordinate Fe cation.

Belongs to the ROX family. NO66 subfamily. The cofactor is Fe(2+).

The protein resides in the nucleus. The enzyme catalyses N(6),N(6)-dimethyl-L-lysyl(36)-[histone H3] + 2 2-oxoglutarate + 2 O2 = L-lysyl(36)-[histone H3] + 2 formaldehyde + 2 succinate + 2 CO2. Oxygenase that can act as both a histone lysine demethylase and a ribosomal histidine hydroxylase. Specifically demethylates 'Lys-4' (H3K4me) and 'Lys-36' (H3K36me) of histone H3, thereby playing a central role in histone code. This chain is Bifunctional lysine-specific demethylase and histidyl-hydroxylase NO66, found in Drosophila melanogaster (Fruit fly).